A 223-amino-acid polypeptide reads, in one-letter code: CKLF-like MARVEL transmembrane domain-containing protein 5 (223 aa).

In terms of domain architecture, MARVEL spans 29-213; the sequence is FLTSHKGILL…DAFKIYRTEM (185 aa). The next 4 helical transmembrane spans lie at 35–55, 56–76, 162–182, and 186–206; these read GILLETELALTLIIFICFTAS, ISAYMAAALLEFFITLAFLFL, FLRCVSAIIIFLVVSFAAVTS, and AAIAAFVFGIILVSIFAYDAF.

This sequence belongs to the chemokine-like factor family. In terms of tissue distribution, highly expressed in the brain.

It is found in the membrane. This Homo sapiens (Human) protein is CKLF-like MARVEL transmembrane domain-containing protein 5 (CMTM5).